The following is a 203-amino-acid chain: Glycerol-3-phosphate acyltransferase (203 aa).

The next 6 membrane-spanning stretches (helical) occupy residues 3 to 23 (NLIL…LILA), 61 to 81 (ILTV…ASFL), 87 to 107 (VLWT…FLGF), 118 to 138 (GVLA…WFLV), 144 to 164 (ISSL…FIIH), and 172 to 192 (THAP…PNIV).

Belongs to the PlsY family. In terms of assembly, probably interacts with PlsX.

It localises to the cell inner membrane. The enzyme catalyses an acyl phosphate + sn-glycerol 3-phosphate = a 1-acyl-sn-glycero-3-phosphate + phosphate. The protein operates within lipid metabolism; phospholipid metabolism. Functionally, catalyzes the transfer of an acyl group from acyl-phosphate (acyl-PO(4)) to glycerol-3-phosphate (G3P) to form lysophosphatidic acid (LPA). This enzyme utilizes acyl-phosphate as fatty acyl donor, but not acyl-CoA or acyl-ACP. The sequence is that of Glycerol-3-phosphate acyltransferase from Campylobacter concisus (strain 13826).